The primary structure comprises 161 residues: 2-C-methyl-D-erythritol 2,4-cyclodiphosphate synthase (161 aa).

Residues aspartate 10 and histidine 12 each coordinate a divalent metal cation. 4-CDP-2-C-methyl-D-erythritol 2-phosphate-binding positions include 10–12 (DVH) and 36–37 (HS). Position 44 (histidine 44) interacts with a divalent metal cation. 4-CDP-2-C-methyl-D-erythritol 2-phosphate contacts are provided by residues 58–60 (DIG), 63–67 (FSDTD), and arginine 144.

It belongs to the IspF family. As to quaternary structure, homotrimer. A divalent metal cation serves as cofactor.

It carries out the reaction 4-CDP-2-C-methyl-D-erythritol 2-phosphate = 2-C-methyl-D-erythritol 2,4-cyclic diphosphate + CMP. It participates in isoprenoid biosynthesis; isopentenyl diphosphate biosynthesis via DXP pathway; isopentenyl diphosphate from 1-deoxy-D-xylulose 5-phosphate: step 4/6. Involved in the biosynthesis of isopentenyl diphosphate (IPP) and dimethylallyl diphosphate (DMAPP), two major building blocks of isoprenoid compounds. Catalyzes the conversion of 4-diphosphocytidyl-2-C-methyl-D-erythritol 2-phosphate (CDP-ME2P) to 2-C-methyl-D-erythritol 2,4-cyclodiphosphate (ME-CPP) with a corresponding release of cytidine 5-monophosphate (CMP). The chain is 2-C-methyl-D-erythritol 2,4-cyclodiphosphate synthase from Burkholderia ambifaria (strain MC40-6).